The primary structure comprises 211 residues: MAIQESKQIQVLRFIHEAQLNNGYPPTVREVGEAVGLSSSSTIHGHIERLVKKGYLLKDASKPRARAIEVTDSGLEALGVSTTPGRIPVLGQVTAGAPILAVEEEATEFFPIPDNLMQFDGDMFMLNVRGNSMINIGILDGDKVIVRKQDNADNGDVVVAMNDDDEATVKRFFREADHFRLQPENDAMAPIILKQVAILGKVIGLYRDAIY.

A DNA-binding region (H-T-H motif) is located at residues 28 to 48; that stretch reads VREVGEAVGLSSSSTIHGHIE. Active-site for autocatalytic cleavage activity residues include Ser132 and Lys170.

Belongs to the peptidase S24 family. Homodimer.

The enzyme catalyses Hydrolysis of Ala-|-Gly bond in repressor LexA.. Functionally, represses a number of genes involved in the response to DNA damage (SOS response), including recA and lexA. In the presence of single-stranded DNA, RecA interacts with LexA causing an autocatalytic cleavage which disrupts the DNA-binding part of LexA, leading to derepression of the SOS regulon and eventually DNA repair. The protein is LexA repressor of Leuconostoc citreum (strain KM20).